Reading from the N-terminus, the 86-residue chain is Neurotoxin 3FTx-LT (86 aa).

Positions 1 to 21 (MKTLLLTLVVVTIVCLDLGYT) are cleaved as a signal peptide. 5 cysteine pairs are disulfide-bonded: Cys-24–Cys-45, Cys-27–Cys-32, Cys-38–Cys-63, Cys-67–Cys-78, and Cys-79–Cys-84.

As to expression, expressed by the venom gland.

It is found in the secreted. Its function is as follows. Binds with low affinity to muscular (alpha-1-beta-1-delta-epsilon/CHRNA1-CHRNB1-CHRND-CHRNE) and very low affinity to neuronal (alpha-7/CHRNA7) nicotinic acetylcholine receptor (nAChR). The chain is Neurotoxin 3FTx-LT from Bungarus fasciatus (Banded krait).